Consider the following 242-residue polypeptide: Biosynthetic peptidoglycan transglycosylase (242 aa).

The helical transmembrane segment at 19-39 (ILAALAVFWGGGIALFSVVPV) threads the bilayer.

It belongs to the glycosyltransferase 51 family.

The protein resides in the cell inner membrane. The catalysed reaction is [GlcNAc-(1-&gt;4)-Mur2Ac(oyl-L-Ala-gamma-D-Glu-L-Lys-D-Ala-D-Ala)](n)-di-trans,octa-cis-undecaprenyl diphosphate + beta-D-GlcNAc-(1-&gt;4)-Mur2Ac(oyl-L-Ala-gamma-D-Glu-L-Lys-D-Ala-D-Ala)-di-trans,octa-cis-undecaprenyl diphosphate = [GlcNAc-(1-&gt;4)-Mur2Ac(oyl-L-Ala-gamma-D-Glu-L-Lys-D-Ala-D-Ala)](n+1)-di-trans,octa-cis-undecaprenyl diphosphate + di-trans,octa-cis-undecaprenyl diphosphate + H(+). The protein operates within cell wall biogenesis; peptidoglycan biosynthesis. Functionally, peptidoglycan polymerase that catalyzes glycan chain elongation from lipid-linked precursors. This is Biosynthetic peptidoglycan transglycosylase from Salmonella newport (strain SL254).